Reading from the N-terminus, the 322-residue chain is Extracellular metalloprotease AFUB_008060 (322 aa).

The N-terminal stretch at 1 to 22 is a signal peptide; it reads MLPFNSCVYVLLIISLMSNCRA. Residues asparagine 123 and asparagine 197 are each glycosylated (N-linked (GlcNAc...) asparagine). Histidine 233 lines the Zn(2+) pocket. The active site involves glutamate 234. Histidine 237 contributes to the Zn(2+) binding site. The cysteines at positions 272 and 299 are disulfide-linked.

Belongs to the peptidase M43B family.

It is found in the secreted. Functionally, secreted metalloproteinase that allows assimilation of proteinaceous substrates. Plays a pivotal role as a pathogenicity determinant during infections and contributes to the ability of the pathogen to persist within the mammalian host. The polypeptide is Extracellular metalloprotease AFUB_008060 (Aspergillus fumigatus (strain CBS 144.89 / FGSC A1163 / CEA10) (Neosartorya fumigata)).